Here is a 284-residue protein sequence, read N- to C-terminus: Proteasome subunit beta 1 (284 aa).

The propeptide at 1-56 (MASHDSYTGRLPGAFMNPGTSSFTEFLASYNPDLLPGRHMTALAGGMPGNVEAPHA) is removed in mature form; by autocatalysis. Thr-57 (nucleophile) is an active-site residue.

Belongs to the peptidase T1B family. The 20S proteasome core is composed of 14 alpha and 14 beta subunits that assemble into four stacked heptameric rings, resulting in a barrel-shaped structure. The two inner rings, each composed of seven catalytic beta subunits, are sandwiched by two outer rings, each composed of seven alpha subunits. The catalytic chamber with the active sites is on the inside of the barrel. Has a gated structure, the ends of the cylinder being occluded by the N-termini of the alpha-subunits. Is capped by the proteasome-associated ATPase, ARC.

It localises to the cytoplasm. It catalyses the reaction Cleavage of peptide bonds with very broad specificity.. The protein operates within protein degradation; proteasomal Pup-dependent pathway. With respect to regulation, the formation of the proteasomal ATPase ARC-20S proteasome complex, likely via the docking of the C-termini of ARC into the intersubunit pockets in the alpha-rings, may trigger opening of the gate for substrate entry. Interconversion between the open-gate and close-gate conformations leads to a dynamic regulation of the 20S proteasome proteolysis activity. Its function is as follows. Component of the proteasome core, a large protease complex with broad specificity involved in protein degradation. The protein is Proteasome subunit beta 1 of Thermomonospora curvata (strain ATCC 19995 / DSM 43183 / JCM 3096 / KCTC 9072 / NBRC 15933 / NCIMB 10081 / Henssen B9).